The primary structure comprises 130 residues: MQTTFTELMQQLFLKLGLNHQVNENDVYTFEVDGHIQVLIACYHQQWVQLFSELGADLPTNDNLFGEHWPAHVQGRLDGKPILWSQQSLVGLDIDEMQAWLERFIDDIEQRKESQNTKFQPNSTSPILFI.

As to quaternary structure, binds to YopT.

Functionally, functions as a specific chaperone for YopT. The polypeptide is Chaperone protein SycT (sycT) (Yersinia enterocolitica serotype O:8 / biotype 1B (strain NCTC 13174 / 8081)).